A 467-amino-acid polypeptide reads, in one-letter code: Nuclear distribution protein nudF 1 (467 aa).

Residues 9 to 41 enclose the LisH domain; the sequence is QAEELHKSIIAYLASVNLSESATTLRAELGDAV. The stretch at 60–87 forms a coiled coil; the sequence is TSVVRLQKKIMDLESRCAALQSELDSAT. WD repeat units follow at residues 113-154, 156-196, 200-247, 250-289, 292-352, 354-393, 398-428, and 429-466; these read SHRS…RTVK, HTKA…KNIR, GHDH…CVKT, GHVD…TRST, GHEH…IKTL, GHDN…KCVR, THEH…NGTP, and AATT…RVFA. Positions 417 to 437 are enriched in low complexity; the sequence is GANGDAGANGTPAATTTSNGA. Residues 417-441 are disordered; sequence GANGDAGANGTPAATTTSNGARQDP.

It belongs to the WD repeat LIS1/nudF family. In terms of assembly, self-associates. Interacts with nudE and dynein.

The protein localises to the cytoplasm. Its subcellular location is the cytoskeleton. It is found in the spindle pole. In terms of biological role, positively regulates the activity of the minus-end directed microtubule motor protein dynein. May enhance dynein-mediated microtubule sliding by targeting dynein to the microtubule plus end. Required for nuclear migration during vegetative growth as well as development. Required for retrograde early endosome (EE) transport from the hyphal tip. Required for localization of dynein to the mitotic spindle poles. Recruits additional proteins to the dynein complex at SPBs. This chain is Nuclear distribution protein nudF 1, found in Aspergillus clavatus (strain ATCC 1007 / CBS 513.65 / DSM 816 / NCTC 3887 / NRRL 1 / QM 1276 / 107).